We begin with the raw amino-acid sequence, 59 residues long: Large ribosomal subunit protein bL32 (59 aa).

Positions 1 to 15 (MAVPKKKTSKSKRDM) are enriched in basic residues. Positions 1–26 (MAVPKKKTSKSKRDMRRATWNRKAAA) are disordered.

Belongs to the bacterial ribosomal protein bL32 family.

The sequence is that of Large ribosomal subunit protein bL32 from Cyanothece sp. (strain PCC 7425 / ATCC 29141).